The chain runs to 245 residues: Histone deacetylase HDT1 (245 aa).

M1 bears the N-acetylmethionine mark. Required to repress transcription stretches follow at residues 2–5 (EFWG) and 101–162 (GYSE…EEEE). Positions 99 to 245 (PQGYSEEEEE…HNKAKHAAAK (147 aa)) are disordered. The span at 103 to 113 (SEEEEEEEEEV) shows a compositional bias: acidic residues. Low complexity predominate over residues 114-124 (PAGNAAKAVAK). Residues 137 to 162 (DDEEDESDSDGMDEDDSDGEDSEEEE) are compositionally biased toward acidic residues. Positions 178–195 (TTPKAPVSAKKAKVAVTP) are enriched in low complexity. Over residues 208 to 234 (ANQSPKSASQVSCGSCKKTFNSGNALE) the composition is skewed to polar residues. S211 carries the post-translational modification Phosphoserine. Residues 218–241 (VSCGSCKKTFNSGNALESHNKAKH) form a C2H2-type zinc finger.

The protein belongs to the histone deacetylase HD2 family. In terms of assembly, interacts with DNMT2. Interacts with DEK3. Expressed in leaves, roots, stems, young plantlets, flowers and siliques. Highest levels in ovules, embryos, shoot apical meristems and first leaves. Also expressed in somatic embryos.

It localises to the nucleus. Its subcellular location is the nucleolus. Probably mediates the deacetylation of lysine residues on the N-terminal part of the core histones (H2A, H2B, H3 and H4). Histone deacetylation gives a tag for epigenetic repression and plays an important role in transcriptional regulation, cell cycle progression and developmental events. Required for histone H3 'Lys-9' deacetylation. Involved in rRNA gene silencing in nucleolar dominance. Seems to be implicated in the regulation of genes involved in seeds development. In Arabidopsis thaliana (Mouse-ear cress), this protein is Histone deacetylase HDT1.